Consider the following 297-residue polypeptide: Pyridoxal 5'-phosphate synthase subunit SNZ1 (297 aa).

Residue aspartate 23 coordinates D-ribose 5-phosphate. The Schiff-base intermediate with D-ribose 5-phosphate role is filled by lysine 80. Glycine 152 contributes to the D-ribose 5-phosphate binding site. Arginine 164 lines the D-glyceraldehyde 3-phosphate pocket. Residues glycine 214 and 235–236 (GS) each bind D-ribose 5-phosphate.

Belongs to the PdxS/SNZ family. Homohexamer. Interacts with AIM18.

It catalyses the reaction aldehydo-D-ribose 5-phosphate + D-glyceraldehyde 3-phosphate + L-glutamine = pyridoxal 5'-phosphate + L-glutamate + phosphate + 3 H2O + H(+). It participates in cofactor biosynthesis; pyridoxal 5'-phosphate biosynthesis. Functionally, catalyzes the formation of pyridoxal 5'-phosphate from ribose 5-phosphate (RBP), glyceraldehyde 3-phosphate (G3P) and ammonia. The ammonia is provided by a SNO isoform. Can also use ribulose 5-phosphate and dihydroxyacetone phosphate as substrates, resulting from enzyme-catalyzed isomerization of RBP and G3P, respectively. This is Pyridoxal 5'-phosphate synthase subunit SNZ1 (SNZ1) from Saccharomyces cerevisiae (strain ATCC 204508 / S288c) (Baker's yeast).